Reading from the N-terminus, the 184-residue chain is Myeloproliferative leukemia protein (184 aa).

A WSXWS motif motif is present at residues 26-30; sequence WSAWS. A helical transmembrane segment spans residues 44-64; that stretch reads ITLVTALLLVLSLSALLGLLL. Positions 80-88 match the Box 1 motif motif; the sequence is LWPSLPDLH.

Belongs to the type I cytokine receptor family. Type 1 subfamily.

It localises to the membrane. Its function is as follows. Truncated form of the receptor for thrombopoietin. The polypeptide is Myeloproliferative leukemia protein (V-MPL) (Mus musculus (Mouse)).